Consider the following 803-residue polypeptide: Ras GTPase-activating protein 4 (803 aa).

C2 domains follow at residues 1-105 (MAKR…SGWA) and 116-232 (VQGE…EGWF). Ca(2+) contacts are provided by aspartate 21, aspartate 27, aspartate 74, aspartate 76, serine 79, aspartate 82, aspartate 149, aspartate 155, aspartate 202, aspartate 204, serine 207, and aspartate 210. The 229-residue stretch at 318–546 (GLAKDFLDLL…AQLKDFITKL (229 aa)) folds into the Ras-GAP domain. The PH domain maps to 566 to 673 (PPVKEGPLFI…WLSALRKVSI (108 aa)). The Btk-type zinc-finger motif lies at 675–711 (NTGLLGSYHPGVFRGDKWSCCHQKEKTGQGCDKTRSR). The Zn(2+) site is built by histidine 683, cysteine 694, cysteine 695, and cysteine 705. The tract at residues 781–803 (EAHSSSPAGSPPSEPNCLLELQT) is disordered.

Requires Ca(2+) as cofactor. As to expression, widely expressed.

The protein localises to the cytoplasm. The protein resides in the cytosol. It is found in the cell membrane. In terms of biological role, ca(2+)-dependent Ras GTPase-activating protein, that switches off the Ras-MAPK pathway following a stimulus that elevates intracellular calcium. Functions as an adaptor for Cdc42 and Rac1 during FcR-mediated phagocytosis. This Homo sapiens (Human) protein is Ras GTPase-activating protein 4 (RASA4).